We begin with the raw amino-acid sequence, 234 residues long: tRNA (guanine-N(1)-)-methyltransferase (234 aa).

S-adenosyl-L-methionine is bound by residues glycine 115 and 135–140 (VGDYIL).

Belongs to the RNA methyltransferase TrmD family. As to quaternary structure, homodimer.

The protein resides in the cytoplasm. The enzyme catalyses guanosine(37) in tRNA + S-adenosyl-L-methionine = N(1)-methylguanosine(37) in tRNA + S-adenosyl-L-homocysteine + H(+). Its function is as follows. Specifically methylates guanosine-37 in various tRNAs. The protein is tRNA (guanine-N(1)-)-methyltransferase of Rickettsia peacockii (strain Rustic).